We begin with the raw amino-acid sequence, 89 residues long: Small ribosomal subunit protein uS15 (89 aa).

It belongs to the universal ribosomal protein uS15 family. In terms of assembly, part of the 30S ribosomal subunit. Forms a bridge to the 50S subunit in the 70S ribosome, contacting the 23S rRNA.

One of the primary rRNA binding proteins, it binds directly to 16S rRNA where it helps nucleate assembly of the platform of the 30S subunit by binding and bridging several RNA helices of the 16S rRNA. Its function is as follows. Forms an intersubunit bridge (bridge B4) with the 23S rRNA of the 50S subunit in the ribosome. The protein is Small ribosomal subunit protein uS15 of Bradyrhizobium sp. (strain BTAi1 / ATCC BAA-1182).